We begin with the raw amino-acid sequence, 56 residues long: Large ribosomal subunit protein bL32c (56 aa).

This sequence belongs to the bacterial ribosomal protein bL32 family.

Its subcellular location is the plastid. It localises to the chloroplast. This is Large ribosomal subunit protein bL32c from Huperzia lucidula (Shining clubmoss).